Consider the following 955-residue polypeptide: Sex determination protein fruitless (955 aa).

Disordered stretches follow at residues 1–55 (MMAT…HAHS) and 70–89 (IETD…LPLP). Over residues 35-55 (PHGHGHLHSHAHAHGHGHAHS) the composition is skewed to basic residues. Positions 76–89 (APPPPLPPPPLPLP) are enriched in pro residues. Residues 131–196 (CDVTLACEGE…MYKGEVNVGQ (66 aa)) form the BTB domain. 3 disordered regions span residues 229–288 (LRDS…SMSE), 352–526 (NRSA…LGGG), and 784–814 (ANHQ…SGAG). A compositionally biased stretch (polar residues) spans 233-246 (AASSPTGRGPSNYT). Basic and acidic residues-rich tracts occupy residues 258–279 (AMRE…DELT) and 360–379 (CSDR…RDDL). Over residues 387 to 420 (KDNNNSNSSSTGGNNNNNNNNNNNSSSNNNNSSS) the composition is skewed to low complexity. Basic and acidic residues predominate over residues 421–446 (NRERNNSGERERERERERERDRDREL). Composition is skewed to low complexity over residues 464-475 (SSSNCDNSLSSS) and 790-814 (QHPP…SGAG). Residues 918–941 (HECPVCGQKFTRRDNMKAHCKIKH) form a C2H2-type zinc finger.

In terms of tissue distribution, expressed in parts of the adult male brain associated with the courtship song and steps of the male courtship. Also expressed in the larval and pupal male mushroom body and optic lobe. Expressed in pupal female optic lobe.

The protein localises to the nucleus. In terms of biological role, probably acts as a transcriptional regulator. Part of the somatic sex determination hierarchy; sex determination genes transformer (tra) and transformer-2 (tra-2) switch fru splicing from the male-specific pattern to the female-specific pattern through activation of the female-specific fru 5'-splice site. Vital for the development of males and females. Controls the development of the male specific abdominal muscle of Lawrence. Plays a role in male courtship behavior and sexual orientation. Enhances male-specific expression of takeout in brain-associated fat body. The sequence is that of Sex determination protein fruitless (fru) from Drosophila melanogaster (Fruit fly).